A 281-amino-acid chain; its full sequence is Nucleotide-binding protein Tpet_1006 (281 aa).

9 to 16 (GLSGAGKT) serves as a coordination point for ATP. Position 58-61 (58-61 (DVRS)) interacts with GTP.

It belongs to the RapZ-like family.

Displays ATPase and GTPase activities. The chain is Nucleotide-binding protein Tpet_1006 from Thermotoga petrophila (strain ATCC BAA-488 / DSM 13995 / JCM 10881 / RKU-1).